We begin with the raw amino-acid sequence, 334 residues long: MGSIGSMGKPIEGFLVAAIQFPVPIVNSRKDIDHNIESIIRTLHATKAGYPGVELIIFPEYSTQGLNTAKWLSEEFLLDVPGKETEAYAQACKEAKVYGVFSIMERNPDSNKNPYNTAIIIDPQGKIILKYRKLFPWNPIEPWYPGDLGMPVCEGPGGSKLAVCICHDGMIPELAREAAYKGCNVYIRISGYSTQVNDQWILTNRSNAWHNLMYTVSVNLAGYDNVFYYFGEGQICNFDGTTLVQGHRNPWEIVTGEIYPKMADNARLSWGLENNIYNLGHRGYVAKPGGEHDAGLTYIKDLAAGKYKLPWEDHMKIKDGSIYGYPTTGGRFGK.

One can recognise a CN hydrolase domain in the interval 14-260 (FLVAAIQFPV…WEIVTGEIYP (247 aa)). Catalysis depends on Glu-60, which acts as the Proton acceptor. Lys-133 (proton donor) is an active-site residue. Cys-166 serves as the catalytic Nucleophile.

The protein belongs to the carbon-nitrogen hydrolase superfamily. Aliphatic amidase family.

It carries out the reaction formamide + H2O = formate + NH4(+). Is an aliphatic amidase with a restricted substrate specificity, as it only hydrolyzes formamide. The polypeptide is Formamidase (Helicobacter pylori (strain P12)).